Here is a 440-residue protein sequence, read N- to C-terminus: MKTRDEKITVSDGLERLPEPALKSDERKMARQKIYALLEDRDATLTFEEDDPLEQTMVLNMGPQHPATHGVLRVVLKLDGERVVHAVPELGYLHRAMEKLAENKSYHEFMPYTDRLDYMSPYSNNTALCLAVEKLAEIEVPERATYIRTIACELARISSHLLSIGALVMDTGALSVFLWTFQEREKIYDIFDLLTGARFTISHCRVGGIASDLSKECAELIIRWLKQFKPKIQEWRKLLDRNRIFIERLEGVGVISKEDAIAIGLSGPNLRASGVHYDIRRDEPYLAYNDLDFEIPTFENGDSYARYQMRMLEMEESVKIIEQALRKLPKGEVRNEDAKKTFPWKDEIYHSMESLIHDFMMTDSGIQMPKGEIYHAIEAPKGELGFYIQSRGEGVPWRLKIRSPSFCNLQALPKLVEGGMIADVVIIIGSLDPVMGEADK.

The protein belongs to the complex I 49 kDa subunit family. As to quaternary structure, NDH-1 is composed of 14 different subunits. Subunits NuoB, C, D, E, F, and G constitute the peripheral sector of the complex.

The protein localises to the cell inner membrane. The enzyme catalyses a quinone + NADH + 5 H(+)(in) = a quinol + NAD(+) + 4 H(+)(out). In terms of biological role, NDH-1 shuttles electrons from NADH, via FMN and iron-sulfur (Fe-S) centers, to quinones in the respiratory chain. The immediate electron acceptor for the enzyme in this species is believed to be a menaquinone. Couples the redox reaction to proton translocation (for every two electrons transferred, four hydrogen ions are translocated across the cytoplasmic membrane), and thus conserves the redox energy in a proton gradient. This is NADH-quinone oxidoreductase subunit D 1 from Chloroherpeton thalassium (strain ATCC 35110 / GB-78).